The following is a 20-amino-acid chain: Truncated non-structural protein of 4.9 kDa (20 aa).

Belongs to the coronaviruses ns4.9 protein family.

The polypeptide is Truncated non-structural protein of 4.9 kDa (Sus scrofa (Pig)).